Consider the following 572-residue polypeptide: Probable D-xylulose kinase A (572 aa).

Substrate-binding residues include His-95, Arg-166, Asp-282, and Asn-283. Residues Trp-365, 470–471 (GG), and Asn-474 contribute to the ATP site.

The protein belongs to the FGGY kinase family.

The protein localises to the cytoplasm. It carries out the reaction D-xylulose + ATP = D-xylulose 5-phosphate + ADP + H(+). In terms of biological role, highly specific D-xylulose kinase which participates in the catabolism of xylose. Xylose is a major component of hemicelluloses such as xylan. Most fungi utilize D-xylose via three enzymatic reactions, xylose reductase (XR), xylitol dehydrogenase (XDH), and xylulokinase, to form xylulose 5-phosphate, which enters pentose phosphate pathway. The sequence is that of Probable D-xylulose kinase A (xkiA) from Aspergillus oryzae (strain ATCC 42149 / RIB 40) (Yellow koji mold).